We begin with the raw amino-acid sequence, 109 residues long: MMPMNPKQLKKLMKQLDMKQLDGVKEVIIKLENKEIVIKEPVVTVIRAMGEKMYQIAGGTEEERVVLKISEEDIKLVMEQAGVDYETAKKALEEAGGDLAEAILRLTDQ.

Residues 3 to 69 (PMNPKQLKKL…TEEERVVLKI (67 aa)) form the NAC-A/B domain.

This sequence belongs to the NAC-alpha family. In terms of assembly, homodimer. Interacts with the ribosome. Binds ribosomal RNA.

Contacts the emerging nascent chain on the ribosome. This chain is Nascent polypeptide-associated complex protein, found in Pyrococcus abyssi (strain GE5 / Orsay).